A 454-amino-acid chain; its full sequence is Bifunctional protein GlmU (454 aa).

The segment at 1–225 (MNIVILAAGM…LWETLGVNSK (225 aa)) is pyrophosphorylase. Residues 6 to 9 (LAAG), Lys20, Gln71, 76 to 77 (GT), 98 to 100 (YGD), Gly135, Glu150, Asn165, and Asn223 contribute to the UDP-N-acetyl-alpha-D-glucosamine site. A Mg(2+)-binding site is contributed by Asp100. Asn223 lines the Mg(2+) pocket. Positions 226–246 (VQLAEVERIHQRNLAQRLLET) are linker. An N-acetyltransferase region spans residues 247-454 (GVTLADPARI…WQRPVKKAKQ (208 aa)). 2 residues coordinate UDP-N-acetyl-alpha-D-glucosamine: Arg329 and Lys347. His359 functions as the Proton acceptor in the catalytic mechanism. Residues Tyr362 and Asn373 each coordinate UDP-N-acetyl-alpha-D-glucosamine. Acetyl-CoA is bound by residues Ala376, 382–383 (NY), Ser401, Ala419, and Arg436.

This sequence in the N-terminal section; belongs to the N-acetylglucosamine-1-phosphate uridyltransferase family. In the C-terminal section; belongs to the transferase hexapeptide repeat family. Homotrimer. Mg(2+) is required as a cofactor.

The protein resides in the cytoplasm. The catalysed reaction is alpha-D-glucosamine 1-phosphate + acetyl-CoA = N-acetyl-alpha-D-glucosamine 1-phosphate + CoA + H(+). The enzyme catalyses N-acetyl-alpha-D-glucosamine 1-phosphate + UTP + H(+) = UDP-N-acetyl-alpha-D-glucosamine + diphosphate. It functions in the pathway nucleotide-sugar biosynthesis; UDP-N-acetyl-alpha-D-glucosamine biosynthesis; N-acetyl-alpha-D-glucosamine 1-phosphate from alpha-D-glucosamine 6-phosphate (route II): step 2/2. It participates in nucleotide-sugar biosynthesis; UDP-N-acetyl-alpha-D-glucosamine biosynthesis; UDP-N-acetyl-alpha-D-glucosamine from N-acetyl-alpha-D-glucosamine 1-phosphate: step 1/1. The protein operates within bacterial outer membrane biogenesis; LPS lipid A biosynthesis. Its function is as follows. Catalyzes the last two sequential reactions in the de novo biosynthetic pathway for UDP-N-acetylglucosamine (UDP-GlcNAc). The C-terminal domain catalyzes the transfer of acetyl group from acetyl coenzyme A to glucosamine-1-phosphate (GlcN-1-P) to produce N-acetylglucosamine-1-phosphate (GlcNAc-1-P), which is converted into UDP-GlcNAc by the transfer of uridine 5-monophosphate (from uridine 5-triphosphate), a reaction catalyzed by the N-terminal domain. This is Bifunctional protein GlmU from Cupriavidus pinatubonensis (strain JMP 134 / LMG 1197) (Cupriavidus necator (strain JMP 134)).